The sequence spans 251 residues: Diphthine synthase (251 aa).

Residues leucine 9, aspartate 85, valine 88, 113–114 (SI), leucine 165, alanine 202, and histidine 227 contribute to the S-adenosyl-L-methionine site.

It belongs to the diphthine synthase family. In terms of assembly, homodimer.

The enzyme catalyses 2-[(3S)-amino-3-carboxypropyl]-L-histidyl-[translation elongation factor 2] + 3 S-adenosyl-L-methionine = diphthine-[translation elongation factor 2] + 3 S-adenosyl-L-homocysteine + 3 H(+). Its pathway is protein modification; peptidyl-diphthamide biosynthesis. In terms of biological role, S-adenosyl-L-methionine-dependent methyltransferase that catalyzes the trimethylation of the amino group of the modified target histidine residue in translation elongation factor 2 (EF-2), to form an intermediate called diphthine. The three successive methylation reactions represent the second step of diphthamide biosynthesis. This chain is Diphthine synthase, found in Methanosphaerula palustris (strain ATCC BAA-1556 / DSM 19958 / E1-9c).